Here is a 383-residue protein sequence, read N- to C-terminus: L-lactate dehydrogenase (383 aa).

Positions Met1 to Ala380 constitute an FMN hydroxy acid dehydrogenase domain. Substrate is bound at residue Tyr24. FMN is bound by residues Ser106 and Gln127. Position 129 (Tyr129) interacts with substrate. Residue Thr155 participates in FMN binding. Residue Arg164 participates in substrate binding. Lys251 contributes to the FMN binding site. His275 serves as the catalytic Proton acceptor. Arg278 is a substrate binding site. Asp306–Arg330 is an FMN binding site.

It belongs to the FMN-dependent alpha-hydroxy acid dehydrogenase family. Requires FMN as cofactor.

It localises to the cell inner membrane. It catalyses the reaction (S)-lactate + A = pyruvate + AH2. Its function is as follows. Catalyzes the conversion of L-lactate to pyruvate. Is coupled to the respiratory chain. This is L-lactate dehydrogenase from Bartonella tribocorum (strain CIP 105476 / IBS 506).